The primary structure comprises 399 residues: Methylthioribose kinase (399 aa).

Residues Asn40, Lys57, and 111–113 contribute to the ATP site; that span reads EDL. Substrate is bound at residue Asp229. ATP is bound at residue 246–248; that stretch reads DAE. Arg344 is a substrate binding site.

It belongs to the methylthioribose kinase family. In terms of assembly, homodimer.

The catalysed reaction is 5-(methylsulfanyl)-D-ribose + ATP = 5-(methylsulfanyl)-alpha-D-ribose 1-phosphate + ADP + H(+). It participates in amino-acid biosynthesis; L-methionine biosynthesis via salvage pathway; S-methyl-5-thio-alpha-D-ribose 1-phosphate from S-methyl-5'-thioadenosine (hydrolase route): step 2/2. In terms of biological role, catalyzes the phosphorylation of methylthioribose into methylthioribose-1-phosphate. This is Methylthioribose kinase from Citrobacter koseri (strain ATCC BAA-895 / CDC 4225-83 / SGSC4696).